The chain runs to 111 residues: MMTLRDLINKLLGRETASANTARERLQLVLAHDRVDMSSLTTDLLDKMRKEILDVVAKYVEIDFEEVAVSLETEDRMTALVANLPIKRTISGEIKFKKNDKTDQADKDIKK.

It belongs to the MinE family.

In terms of biological role, prevents the cell division inhibition by proteins MinC and MinD at internal division sites while permitting inhibition at polar sites. This ensures cell division at the proper site by restricting the formation of a division septum at the midpoint of the long axis of the cell. The chain is Cell division topological specificity factor from Prochlorococcus marinus (strain MIT 9312).